Reading from the N-terminus, the 270-residue chain is Dehydrodolichyl diphosphate synthase (270 aa).

It belongs to the UPP synthase family.

It is found in the endoplasmic reticulum membrane. It participates in protein modification; protein glycosylation. Its function is as follows. Cis-prenyl transferase that adds multiple copies of isopentenyl pyrophosphate (IPP) to farnesyl pyrophosphate (FPP) to produce dehydrodolichyl diphosphate (Dedol-PP). The chain is Dehydrodolichyl diphosphate synthase (RER2) from Encephalitozoon cuniculi (strain GB-M1) (Microsporidian parasite).